Consider the following 395-residue polypeptide: Phosphoglycerate kinase (395 aa).

Residues 22-24 (DLN), Arg37, 60-63 (HFGR), Arg116, and Arg149 each bind substrate. Residues Lys199, Glu322, and 352–355 (GGDT) each bind ATP.

It belongs to the phosphoglycerate kinase family. Monomer.

It is found in the cytoplasm. It catalyses the reaction (2R)-3-phosphoglycerate + ATP = (2R)-3-phospho-glyceroyl phosphate + ADP. The protein operates within carbohydrate degradation; glycolysis; pyruvate from D-glyceraldehyde 3-phosphate: step 2/5. This Novosphingobium aromaticivorans (strain ATCC 700278 / DSM 12444 / CCUG 56034 / CIP 105152 / NBRC 16084 / F199) protein is Phosphoglycerate kinase.